A 230-amino-acid chain; its full sequence is RNA-binding riboflavin kinase RibR (230 aa).

The protein belongs to the RibR family.

The enzyme catalyses riboflavin + ATP = FMN + ADP + H(+). Functionally, may be directly involved in the regulation of the rib genes. C-terminal part of RibR specifically binds to RFN of the rib leader of the riboflavin biosynthetic operon. The RFN element is a sequence within the rib-leader mRNA reported to serve as a receptor for an FMN-dependent riboswitch. Possibly, RibR produces the comodulator FMN through its own N-terminal flavokinase activity. FMN-activated RibR may stabilize the anti-anti terminator structure of RFN mRNA, causing transcription termination of the rib genes in trans. The protein is RNA-binding riboflavin kinase RibR (ribR) of Bacillus subtilis (strain 168).